An 82-amino-acid polypeptide reads, in one-letter code: Protein CYSTEINE-RICH TRANSMEMBRANE MODULE 13 (82 aa).

A disordered region spans residues 1 to 58; it reads MYHQEQHPVGAPPPQGYPPKDGYPPAGYPPAGYPPPGYAQGYPAQGYPPPQYSQAPQQ. Pro residues predominate over residues 26–37; it reads AGYPPAGYPPPG. A helical transmembrane segment spans residues 59 to 76; that stretch reads KQNAGMLEGCLAALCCCC.

This sequence belongs to the CYSTM1 family. Homodimer and heterodimers. Interacts with CYSTM7, CYTSM3, CYTSM4, CYTSM5, CYTSM6, CYTSM9, CYTSM10 and CYTSM11. Binds weakly to CYSTM1 and CYSTM2. As to expression, expressed in root meristem, root vasculature, leaf vasculature and floral organ primordia. Mostly expressed in roots and flowers and, to a lower extent, in stems, siliques and leaves.

It localises to the cell membrane. Required for the promotion of megasporogenesis, or promotion of germ cell formation from somatic precursor cells. Acts redundantly with WIH2. Functions in a genetic pathway downstream of SPL/NZZ and WUS and together with TRN2 in promoting megasporogenesis. Involved in resistance to abiotic stress. This is Protein CYSTEINE-RICH TRANSMEMBRANE MODULE 13 from Arabidopsis thaliana (Mouse-ear cress).